Here is a 266-residue protein sequence, read N- to C-terminus: Thymidylate synthase (266 aa).

Arg-24 contacts dUMP. Residue His-54 participates in (6R)-5,10-methylene-5,6,7,8-tetrahydrofolate binding. 129-130 provides a ligand contact to dUMP; it reads RR. Cys-149 (nucleophile) is an active-site residue. DUMP contacts are provided by residues 169 to 172, Asn-180, and 210 to 212; these read RSAD and HIY. Asp-172 is a binding site for (6R)-5,10-methylene-5,6,7,8-tetrahydrofolate. Ala-265 serves as a coordination point for (6R)-5,10-methylene-5,6,7,8-tetrahydrofolate.

The protein belongs to the thymidylate synthase family. Bacterial-type ThyA subfamily. In terms of assembly, homodimer.

The protein resides in the cytoplasm. The enzyme catalyses dUMP + (6R)-5,10-methylene-5,6,7,8-tetrahydrofolate = 7,8-dihydrofolate + dTMP. The protein operates within pyrimidine metabolism; dTTP biosynthesis. Catalyzes the reductive methylation of 2'-deoxyuridine-5'-monophosphate (dUMP) to 2'-deoxythymidine-5'-monophosphate (dTMP) while utilizing 5,10-methylenetetrahydrofolate (mTHF) as the methyl donor and reductant in the reaction, yielding dihydrofolate (DHF) as a by-product. This enzymatic reaction provides an intracellular de novo source of dTMP, an essential precursor for DNA biosynthesis. The protein is Thymidylate synthase of Nocardia farcinica (strain IFM 10152).